The primary structure comprises 198 residues: 3-isopropylmalate dehydratase small subunit (198 aa).

The protein belongs to the LeuD family. LeuD type 1 subfamily. As to quaternary structure, heterodimer of LeuC and LeuD.

It carries out the reaction (2R,3S)-3-isopropylmalate = (2S)-2-isopropylmalate. It functions in the pathway amino-acid biosynthesis; L-leucine biosynthesis; L-leucine from 3-methyl-2-oxobutanoate: step 2/4. Catalyzes the isomerization between 2-isopropylmalate and 3-isopropylmalate, via the formation of 2-isopropylmaleate. The protein is 3-isopropylmalate dehydratase small subunit of Mycobacterium avium (strain 104).